The following is a 284-amino-acid chain: tRNA uridine(34) hydroxylase (284 aa).

Positions 132 to 226 (DGRPVVMLDT…YFEEVGGAHY (95 aa)) constitute a Rhodanese domain. C186 (cysteine persulfide intermediate) is an active-site residue.

It belongs to the TrhO family.

The catalysed reaction is uridine(34) in tRNA + AH2 + O2 = 5-hydroxyuridine(34) in tRNA + A + H2O. Catalyzes oxygen-dependent 5-hydroxyuridine (ho5U) modification at position 34 in tRNAs. The sequence is that of tRNA uridine(34) hydroxylase from Burkholderia vietnamiensis (strain G4 / LMG 22486) (Burkholderia cepacia (strain R1808)).